A 686-amino-acid polypeptide reads, in one-letter code: Putative xyloglucan glycosyltransferase 10 (686 aa).

A run of 2 helical transmembrane segments spans residues 114–134 and 160–180; these read LYAFIRASLLLSVFLLAVELA and AAYVAPPLQLLADACVVLFLV. Asp-267 is a catalytic residue. Asp-326 and Asp-328 together coordinate substrate. Residue Asp-420 is part of the active site. Transmembrane regions (helical) follow at residues 498–518, 523–543, 640–656, and 661–681; these read LILPFYSFTLFCIILPMTMFI, LPDWVVCYIPALMSFLNILPA, ELALSLLLLTAAARSLL, and IHFYFLMFQGLSFLLVGLDLI.

This sequence belongs to the glycosyltransferase 2 family. Plant cellulose synthase-like C subfamily.

The protein resides in the golgi apparatus membrane. Functionally, probable beta-1,4-glucan synthase rather involved in the synthesis of the xyloglucan backbone than cellulose. Seems to work simultaneously with xyloglucan 6-xylosyltransferase. Xyloglucan is a noncellulosic polysaccharides of plant cell wall and consists of a glucan backbone substituted by xylose, galactose and fucose. This is Putative xyloglucan glycosyltransferase 10 (CSLC10) from Oryza sativa subsp. indica (Rice).